The primary structure comprises 295 residues: Protease HtpX homolog (295 aa).

A run of 2 helical transmembrane segments spans residues Ile6 to Val26 and Leu40 to Leu60. His148 serves as a coordination point for Zn(2+). Residue Glu149 is part of the active site. His152 is a Zn(2+) binding site. 2 consecutive transmembrane segments (helical) span residues Leu163–Leu183 and Ile198–Phe218. Glu223 contributes to the Zn(2+) binding site.

Belongs to the peptidase M48B family. Zn(2+) is required as a cofactor.

The protein resides in the cell inner membrane. The chain is Protease HtpX homolog from Leptospira borgpetersenii serovar Hardjo-bovis (strain JB197).